Consider the following 193-residue polypeptide: Ribonuclease HII (193 aa).

In terms of domain architecture, RNase H type-2 spans 15 to 193; the sequence is YIVAGIDEAG…PYHRKSFKCC (179 aa). Residues Asp21, Glu22, and Asp112 each coordinate a divalent metal cation.

It belongs to the RNase HII family. Mn(2+) serves as cofactor. Requires Mg(2+) as cofactor.

The protein localises to the cytoplasm. The catalysed reaction is Endonucleolytic cleavage to 5'-phosphomonoester.. In terms of biological role, endonuclease that specifically degrades the RNA of RNA-DNA hybrids. This Rickettsia akari (strain Hartford) protein is Ribonuclease HII.